The sequence spans 447 residues: Ribulose bisphosphate carboxylase large chain (447 aa).

Substrate contacts are provided by N89 and T139. K141 acts as the Proton acceptor in catalysis. K143 provides a ligand contact to substrate. Mg(2+)-binding residues include K167, D169, and E170. K167 bears the N6-carboxylysine mark. Residue H260 is the Proton acceptor of the active site. Substrate is bound by residues R261, H293, and S345.

It belongs to the RuBisCO large chain family. Type I subfamily. As to quaternary structure, heterohexadecamer of 8 large chains and 8 small chains; disulfide-linked. The disulfide link is formed within the large subunit homodimers. Mg(2+) is required as a cofactor. In terms of processing, the disulfide bond which can form in the large chain dimeric partners within the hexadecamer appears to be associated with oxidative stress and protein turnover.

The protein resides in the plastid. The protein localises to the chloroplast. It carries out the reaction 2 (2R)-3-phosphoglycerate + 2 H(+) = D-ribulose 1,5-bisphosphate + CO2 + H2O. The catalysed reaction is D-ribulose 1,5-bisphosphate + O2 = 2-phosphoglycolate + (2R)-3-phosphoglycerate + 2 H(+). RuBisCO catalyzes two reactions: the carboxylation of D-ribulose 1,5-bisphosphate, the primary event in carbon dioxide fixation, as well as the oxidative fragmentation of the pentose substrate in the photorespiration process. Both reactions occur simultaneously and in competition at the same active site. The polypeptide is Ribulose bisphosphate carboxylase large chain (Ligustrum vulgare (Common privet)).